Reading from the N-terminus, the 348-residue chain is NADH-quinone oxidoreductase subunit H (348 aa).

The next 8 membrane-spanning stretches (helical) occupy residues 21–41, 87–107, 120–140, 166–186, 193–213, 258–278, 283–303, and 323–343; these read IIGI…IIYA, GLFL…WAVI, IGLL…IIAG, IGFV…SAIV, IFGF…AVVF, NVIL…LPPV, LYMV…FFVF, and WKVF…WLML.

Belongs to the complex I subunit 1 family. NDH-1 is composed of 14 different subunits. Subunits NuoA, H, J, K, L, M, N constitute the membrane sector of the complex.

It localises to the cell inner membrane. It carries out the reaction a quinone + NADH + 5 H(+)(in) = a quinol + NAD(+) + 4 H(+)(out). Its function is as follows. NDH-1 shuttles electrons from NADH, via FMN and iron-sulfur (Fe-S) centers, to quinones in the respiratory chain. The immediate electron acceptor for the enzyme in this species is believed to be ubiquinone. Couples the redox reaction to proton translocation (for every two electrons transferred, four hydrogen ions are translocated across the cytoplasmic membrane), and thus conserves the redox energy in a proton gradient. This subunit may bind ubiquinone. The sequence is that of NADH-quinone oxidoreductase subunit H from Rhizorhabdus wittichii (strain DSM 6014 / CCUG 31198 / JCM 15750 / NBRC 105917 / EY 4224 / RW1) (Sphingomonas wittichii).